The sequence spans 406 residues: Peptidase T (406 aa).

H78 provides a ligand contact to Zn(2+). The active site involves D80. Residue D139 coordinates Zn(2+). E173 acts as the Proton acceptor in catalysis. Positions 174, 196, and 378 each coordinate Zn(2+).

The protein belongs to the peptidase M20B family. Zn(2+) serves as cofactor.

It is found in the cytoplasm. The catalysed reaction is Release of the N-terminal residue from a tripeptide.. In terms of biological role, cleaves the N-terminal amino acid of tripeptides. In Clostridium perfringens (strain ATCC 13124 / DSM 756 / JCM 1290 / NCIMB 6125 / NCTC 8237 / Type A), this protein is Peptidase T.